The primary structure comprises 130 residues: Small ribosomal subunit protein bS16 (130 aa).

Residues 80-130 (AGHTPKKERANMKKAQPGKKAVERAEEKAAKASAAAEAPAEAPAAEAAAEE) are disordered. Residues 99–109 (KAVERAEEKAA) show a composition bias toward basic and acidic residues. Over residues 110-130 (KASAAAEAPAEAPAAEAAAEE) the composition is skewed to low complexity.

Belongs to the bacterial ribosomal protein bS16 family.

The protein is Small ribosomal subunit protein bS16 of Jannaschia sp. (strain CCS1).